A 56-amino-acid polypeptide reads, in one-letter code: MASKSADIRPKITLACEVCKERNYITTKNRRNHPDRLELQKFCPRCTAKTAHRETR.

Belongs to the bacterial ribosomal protein bL33 family.

This Beutenbergia cavernae (strain ATCC BAA-8 / DSM 12333 / CCUG 43141 / JCM 11478 / NBRC 16432 / NCIMB 13614 / HKI 0122) protein is Large ribosomal subunit protein bL33.